The chain runs to 338 residues: Popeye domain-containing protein 1 (338 aa).

Residues 1 to 40 lie on the Extracellular side of the membrane; it reads MATESILITTLPMDLNSQINNVTFGLNENETLCENWREIH. N-linked (GlcNAc...) asparagine glycosylation is found at asparagine 21 and asparagine 29. A helical transmembrane segment spans residues 41 to 61; that stretch reads HLVFHLANTCFAAGLVIPSTL. Residues 62 to 65 lie on the Cytoplasmic side of the membrane; it reads NLHM. Residues 66–86 traverse the membrane as a helical segment; it reads ILLRGMLCLGCIFFIIWAILF. At 87–91 the chain is on the extracellular side; sequence RCALD. The chain crosses the membrane as a helical span at residues 92–112; that stretch reads IMIWNATFLSMNFMHFIYLVY. Topologically, residues 113–338 are cytoplasmic; the sequence is KKRPIKIEKD…VGPLSHAVFC (226 aa).

It belongs to the popeye family.

The protein resides in the lateral cell membrane. It is found in the cell junction. It localises to the tight junction. The protein localises to the membrane. Its subcellular location is the cell membrane. The protein resides in the sarcolemma. It is found in the caveola. Its function is as follows. Cell adhesion molecule involved in the establishment and/or maintenance of cell integrity. May play a role in vamp3-mediated vesicular transport and recycling of different receptor molecules. May be involved in the formation and regulation of the tight junction (TJ) paracellular permeability barrier in epithelial cells. May induce primordial adhesive contact and aggregation of epithelial cells in a Ca(2+)-independent manner. May be involved in epithelial movement during corneal sheet formation and regeneration. May play a role in the regulation of cell shape and movement by modulating the Rho-GTPase activity. May be involved in skeletal muscle and heart development as well as in the maintenance of heart function. May also be involved in striated muscle regeneration and in the regulation of cell spreading. This chain is Popeye domain-containing protein 1 (popdc1), found in Xenopus tropicalis (Western clawed frog).